A 362-amino-acid polypeptide reads, in one-letter code: Chorismate synthase (362 aa).

Position 46 (Arg-46) interacts with NADP(+). FMN contacts are provided by residues 122–124 (RSS), 238–239 (NA), Gly-278, 293–297 (KPTPS), and Arg-319.

It belongs to the chorismate synthase family. Homotetramer. FMNH2 is required as a cofactor.

It catalyses the reaction 5-O-(1-carboxyvinyl)-3-phosphoshikimate = chorismate + phosphate. It participates in metabolic intermediate biosynthesis; chorismate biosynthesis; chorismate from D-erythrose 4-phosphate and phosphoenolpyruvate: step 7/7. In terms of biological role, catalyzes the anti-1,4-elimination of the C-3 phosphate and the C-6 proR hydrogen from 5-enolpyruvylshikimate-3-phosphate (EPSP) to yield chorismate, which is the branch point compound that serves as the starting substrate for the three terminal pathways of aromatic amino acid biosynthesis. This reaction introduces a second double bond into the aromatic ring system. The sequence is that of Chorismate synthase from Campylobacter jejuni subsp. jejuni serotype O:6 (strain 81116 / NCTC 11828).